Consider the following 327-residue polypeptide: MQFIDQANIILKAGKGGNGIVSFRREKFVPAGGPSGGNGGRGGSVILIADNNLQTLLDFKFKREIIAKDGCKGGPNKRSGASGEDTILKVPCGTEIRDIKTGIILGDLTKHKESLTIAIGGRGGHGNAYYLSNQNRAPESFTEGKDGEIWEVQLELKLLAEVGIIGLPNAGKSTLISVLSSARPKIANYPFTTLIPNLGVVRKIDGNGCLFADIPGLISGAADGVGLGHDFLRHIQRTKILLHLIDSIAENPLHDFEIIEQELQKYGKGLLDKERIIVLNKMELVDDDYLKIITKKLEDLSKRKVLVISSSLKKGLSSLLSEVWKRI.

The Obg domain occupies 1-159 (MQFIDQANII…WEVQLELKLL (159 aa)). Residues 160-327 (AEVGIIGLPN…SLLSEVWKRI (168 aa)) enclose the OBG-type G domain. Residues 166–173 (GLPNAGKS), 191–195 (FTTLI), 213–216 (DIPG), 280–283 (NKME), and 309–311 (SSS) contribute to the ATP site. Ser173 and Thr193 together coordinate Mg(2+).

The protein belongs to the TRAFAC class OBG-HflX-like GTPase superfamily. OBG GTPase family. In terms of assembly, monomer. It depends on Mg(2+) as a cofactor.

The protein localises to the cytoplasm. An essential GTPase which binds GTP, GDP and possibly (p)ppGpp with moderate affinity, with high nucleotide exchange rates and a fairly low GTP hydrolysis rate. Plays a role in control of the cell cycle, stress response, ribosome biogenesis and in those bacteria that undergo differentiation, in morphogenesis control. The protein is GTPase Obg of Prochlorococcus marinus (strain MIT 9215).